Reading from the N-terminus, the 125-residue chain is Small ribosomal subunit protein eS8 (125 aa).

The protein belongs to the eukaryotic ribosomal protein eS8 family. As to quaternary structure, part of the 30S ribosomal subunit.

The chain is Small ribosomal subunit protein eS8 from Methanosarcina acetivorans (strain ATCC 35395 / DSM 2834 / JCM 12185 / C2A).